Here is a 1158-residue protein sequence, read N- to C-terminus: cGMP-specific 3',5'-cyclic phosphodiesterase (1158 aa).

Disordered stretches follow at residues M1 to D137 and S195 to E216. The segment covering A30–N71 has biased composition (low complexity). Positions G108–Q135 are enriched in polar residues. Residues S202–P215 show a composition bias toward low complexity. GAF domains are found at residues D242–I394 and N426–I640. The region spanning S670–V993 is the PDEase domain. H746 functions as the Proton donor in the catalytic mechanism. Residues H750, H786, D787, and D897 each contribute to the a divalent metal cation site. Disordered regions lie at residues Q1034–L1065 and V1097–L1158. The span at G1041–R1052 shows a compositional bias: basic and acidic residues. A compositionally biased stretch (low complexity) spans A1114–A1130. The span at S1148–L1158 shows a compositional bias: basic residues. C1155 bears the Cysteine methyl ester mark. The S-farnesyl cysteine moiety is linked to residue C1155. A propeptide spans A1156–L1158 (removed in mature form).

This sequence belongs to the cyclic nucleotide phosphodiesterase family. In terms of assembly, interacts with PrBP. A divalent metal cation serves as cofactor.

Its subcellular location is the cell membrane. It carries out the reaction 3',5'-cyclic GMP + H2O = GMP + H(+). In terms of biological role, has a role regulating cGMP transport in Malpighian tubule principal cells. This Drosophila ananassae (Fruit fly) protein is cGMP-specific 3',5'-cyclic phosphodiesterase.